The chain runs to 310 residues: Syntaxin-related protein KNOLLE (310 aa).

An N-acetylmethionine modification is found at M1. The Cytoplasmic portion of the chain corresponds to 1–283 (MNDLMTKSFM…AKSHQRNSRK (283 aa)). Residues 94–159 (NEIVSGLRKA…FQGLRQKMMS (66 aa)) are a coiled coil. The region spanning 212-274 (VVEIQDRYDA…ADGANELKTA (63 aa)) is the t-SNARE coiled-coil homology domain. Residues 284-304 (WMCIGIIVLLLIILIVVIPII) form a helical; Anchor for type IV membrane protein membrane-spanning segment. Topologically, residues 305 to 310 (TSFSSS) are vesicular.

It belongs to the syntaxin family. In terms of assembly, interacts with SNAP33 and/or NPSN11 to form a t-SNARE complex and with KEULE. Abundant in flowers and developing siliques. A low level expression is seen in the seedlings, roots, and leaves.

It is found in the membrane. Functionally, involved in cytokinesis. Acts as a cell plate-specific syntaxin, required for the fusion of vesicles at the plane of cell division. The polypeptide is Syntaxin-related protein KNOLLE (KN) (Arabidopsis thaliana (Mouse-ear cress)).